Reading from the N-terminus, the 40-residue chain is MFPADVILQCFGFSVGIALVGYVISLFLDWSEEEGDEDDA.

The signal sequence occupies residues 1-27; sequence MFPADVILQCFGFSVGIALVGYVISLF.

This is an uncharacterized protein from Archaeoglobus fulgidus (strain ATCC 49558 / DSM 4304 / JCM 9628 / NBRC 100126 / VC-16).